Consider the following 434-residue polypeptide: D-amino acid dehydrogenase (434 aa).

Position 3–17 (3–17) interacts with FAD; that stretch reads VVILGSGVVGVASAW.

This sequence belongs to the DadA oxidoreductase family. FAD is required as a cofactor.

It catalyses the reaction a D-alpha-amino acid + A + H2O = a 2-oxocarboxylate + AH2 + NH4(+). Its pathway is amino-acid degradation; D-alanine degradation; NH(3) and pyruvate from D-alanine: step 1/1. Its function is as follows. Oxidative deamination of D-amino acids. The polypeptide is D-amino acid dehydrogenase (Yersinia enterocolitica serotype O:8 / biotype 1B (strain NCTC 13174 / 8081)).